The sequence spans 289 residues: 33 kDa chaperonin (289 aa).

2 cysteine pairs are disulfide-bonded: Cys-237-Cys-239 and Cys-270-Cys-273.

The protein belongs to the HSP33 family. In terms of processing, under oxidizing conditions two disulfide bonds are formed involving the reactive cysteines. Under reducing conditions zinc is bound to the reactive cysteines and the protein is inactive.

It localises to the cytoplasm. Redox regulated molecular chaperone. Protects both thermally unfolding and oxidatively damaged proteins from irreversible aggregation. Plays an important role in the bacterial defense system toward oxidative stress. This chain is 33 kDa chaperonin, found in Oceanobacillus iheyensis (strain DSM 14371 / CIP 107618 / JCM 11309 / KCTC 3954 / HTE831).